Consider the following 341-residue polypeptide: Ferrochelatase (341 aa).

Residues His-196 and Glu-277 each coordinate Fe cation.

This sequence belongs to the ferrochelatase family.

It is found in the cytoplasm. The enzyme catalyses heme b + 2 H(+) = protoporphyrin IX + Fe(2+). Its pathway is porphyrin-containing compound metabolism; protoheme biosynthesis; protoheme from protoporphyrin-IX: step 1/1. In terms of biological role, catalyzes the ferrous insertion into protoporphyrin IX. In Synechococcus sp. (strain JA-3-3Ab) (Cyanobacteria bacterium Yellowstone A-Prime), this protein is Ferrochelatase.